Here is a 191-residue protein sequence, read N- to C-terminus: ADP-ribosylation factor (191 aa).

Gly-2 carries the N-myristoyl glycine lipid modification. GTP contacts are provided by residues 24 to 31, 67 to 71, and 128 to 131; these read GLDAAGKT, DVGGQ, and NKQD.

Belongs to the small GTPase superfamily. Arf family.

Its subcellular location is the golgi apparatus. GTP-binding protein involved in protein trafficking; may modulate vesicle budding and uncoating within the Golgi apparatus. This chain is ADP-ribosylation factor, found in Giardia intestinalis (Giardia lamblia).